The primary structure comprises 83 residues: Molybdopterin synthase sulfur carrier subunit (83 aa).

1-thioglycine; alternate is present on glycine 83. Glycine 83 carries the glycyl adenylate; alternate modification.

The protein belongs to the MoaD family. MOCS2A subfamily. As to quaternary structure, heterotetramer; composed of 2 small (MOCS2A) and 2 large (MOCS2B) subunits. Post-translationally, C-terminal thiocarboxylation occurs in 2 steps, it is first acyl-adenylated (-COAMP) via the hesA/moeB/thiF part of MOCS3, then thiocarboxylated (-COSH) via the rhodanese domain of MOCS3.

The protein resides in the cytoplasm. The protein operates within cofactor biosynthesis; molybdopterin biosynthesis. Its function is as follows. Acts as a sulfur carrier required for molybdopterin biosynthesis. Component of the molybdopterin synthase complex that catalyzes the conversion of precursor Z into molybdopterin by mediating the incorporation of 2 sulfur atoms into precursor Z to generate a dithiolene group. In the complex, serves as sulfur donor by being thiocarboxylated (-COSH) at its C-terminus by MOCS3. After interaction with MOCS2B, the sulfur is then transferred to precursor Z to form molybdopterin. The sequence is that of Molybdopterin synthase sulfur carrier subunit from Chlamydomonas reinhardtii (Chlamydomonas smithii).